Here is a 355-residue protein sequence, read N- to C-terminus: Nematocyst expressed protein 3 (355 aa).

The N-terminal stretch at 1–18 is a signal peptide; that stretch reads MKLTYILLIAVVGVAIEA. ShKT domains follow at residues 50-89, 107-134, and 140-182; these read CKDVADDCKAFGKLEKDDENSCFNNPDKARNECPVSCKLC, QPQQCSQQSCYETPQWSVQNCAVTCQLC, and SGPV…CNTY. Intrachain disulfides connect Cys-50–Cys-89, Cys-57–Cys-82, Cys-71–Cys-86, Cys-116–Cys-131, Cys-149–Cys-175, and Cys-158–Cys-179. Residues 92 to 355 constitute a propeptide that is removed on maturation; the sequence is KRSKKQSDYM…KKSKSHKKQH (264 aa). The disordered stretch occupies residues 202-355; it reads YQPNAMPTPP…KKSKSHKKQH (154 aa). A compositionally biased stretch (pro residues) spans 207–221; sequence MPTPPQGVTPAPLPP. 3 stretches are compositionally biased toward low complexity: residues 222 to 232, 240 to 270, and 277 to 332; these read YFQQQGYGYPQ, VQPGQTQAPTAAQSTPAPVQTTPASGKTTTE, and TEAA…AQSD. Residues 335–355 show a composition bias toward basic residues; the sequence is NKKKHKKDKAQKKSKSHKKQH.

It belongs to the NEP3 family. Nematocytes. In late planulae, transcripts are found throughout the ectoderm in nematocytes, with high concentration of expressing cells in the oral pole. In primary polyps, is expressed in nematocytes in the body wall and physa ectoderm and in the upper and lower pharynx.

It is found in the nematocyst. Its subcellular location is the secreted. Neurotoxin. In vivo, induces pronounced contraction and tail twitching on zebrafish larvae, as well as death 5 hours later. The protein is Nematocyst expressed protein 3 of Nematostella vectensis (Starlet sea anemone).